Consider the following 128-residue polypeptide: Large ribosomal subunit protein bL17 (128 aa).

This sequence belongs to the bacterial ribosomal protein bL17 family. Part of the 50S ribosomal subunit. Contacts protein L32.

The sequence is that of Large ribosomal subunit protein bL17 from Streptococcus equi subsp. zooepidemicus (strain H70).